A 382-amino-acid polypeptide reads, in one-letter code: G-box-binding factor 3 (382 aa).

Residues Met1–Lys16 are compositionally biased toward basic and acidic residues. Disordered regions lie at residues Met1 to Asn26, Met97 to Leu221, and Glu257 to Glu285. Positions Thr111–Asn130 are enriched in polar residues. Residues Ala155 to Ser165 show a composition bias toward basic and acidic residues. Residues Glu166–Ala181 show a composition bias toward low complexity. Residues Asp182–Lys199 show a composition bias toward basic and acidic residues. Polar residues predominate over residues Val202–Asp216. A bZIP domain is found at Glu259–Leu322. The interval Lys261 to Lys280 is basic motif. The interval Leu287 to Leu322 is leucine-zipper. Residues Ser329–Gly382 form a disordered region. The segment covering Asp357 to Leu366 has biased composition (polar residues).

This sequence belongs to the bZIP family. As to quaternary structure, DNA-binding heterodimer. Interacts with GBF4. Interacts with BZIP16 and BZIP68. Present only in dark grown leaves and roots.

The protein localises to the nucleus. Binds to the G-box motif (5'-CCACGTGG-3') of the rbcS-1A gene promoter. G-box and G-box-like motifs are cis-acting elements defined in promoters of certain plant genes which are regulated by such diverse stimuli as light-induction or hormone control. The chain is G-box-binding factor 3 (GBF3) from Arabidopsis thaliana (Mouse-ear cress).